Consider the following 264-residue polypeptide: tRNA pseudouridine synthase A (264 aa).

Asp51 acts as the Nucleophile in catalysis. Tyr109 serves as a coordination point for substrate.

This sequence belongs to the tRNA pseudouridine synthase TruA family. Homodimer.

It carries out the reaction uridine(38/39/40) in tRNA = pseudouridine(38/39/40) in tRNA. Formation of pseudouridine at positions 38, 39 and 40 in the anticodon stem and loop of transfer RNAs. The sequence is that of tRNA pseudouridine synthase A from Actinobacillus succinogenes (strain ATCC 55618 / DSM 22257 / CCUG 43843 / 130Z).